The primary structure comprises 170 residues: Peptide deformylase (170 aa).

Fe cation is bound by residues Cys91 and His133. Residue Glu134 is part of the active site. His137 lines the Fe cation pocket.

This sequence belongs to the polypeptide deformylase family. Fe(2+) is required as a cofactor.

It carries out the reaction N-terminal N-formyl-L-methionyl-[peptide] + H2O = N-terminal L-methionyl-[peptide] + formate. In terms of biological role, removes the formyl group from the N-terminal Met of newly synthesized proteins. Requires at least a dipeptide for an efficient rate of reaction. N-terminal L-methionine is a prerequisite for activity but the enzyme has broad specificity at other positions. This chain is Peptide deformylase, found in Histophilus somni (strain 2336) (Haemophilus somnus).